A 90-amino-acid polypeptide reads, in one-letter code: DNA-directed RNA polymerase subunit omega (90 aa).

It belongs to the RNA polymerase subunit omega family. As to quaternary structure, the RNAP catalytic core consists of 2 alpha, 1 beta, 1 beta' and 1 omega subunit. When a sigma factor is associated with the core the holoenzyme is formed, which can initiate transcription.

It catalyses the reaction RNA(n) + a ribonucleoside 5'-triphosphate = RNA(n+1) + diphosphate. Its function is as follows. Promotes RNA polymerase assembly. Latches the N- and C-terminal regions of the beta' subunit thereby facilitating its interaction with the beta and alpha subunits. The chain is DNA-directed RNA polymerase subunit omega from Rhodopirellula baltica (strain DSM 10527 / NCIMB 13988 / SH1).